The chain runs to 74 residues: Small ribosomal subunit protein bS18 (74 aa).

This sequence belongs to the bacterial ribosomal protein bS18 family. As to quaternary structure, part of the 30S ribosomal subunit. Forms a tight heterodimer with protein bS6.

Its function is as follows. Binds as a heterodimer with protein bS6 to the central domain of the 16S rRNA, where it helps stabilize the platform of the 30S subunit. The sequence is that of Small ribosomal subunit protein bS18 from Alkalilimnicola ehrlichii (strain ATCC BAA-1101 / DSM 17681 / MLHE-1).